A 92-amino-acid chain; its full sequence is N(2)-fixation sustaining protein CowN (92 aa).

Belongs to the CowN family.

Its function is as follows. Is required to sustain N(2)-dependent growth in the presence of low levels of carbon monoxide (CO). Probably acts by protecting the N(2) fixation ability of the nitrogenase complex, which is inactivated in the presence of CO. In Rhodopseudomonas palustris (strain BisA53), this protein is N(2)-fixation sustaining protein CowN.